A 309-amino-acid polypeptide reads, in one-letter code: Uricase-2 isozyme 1 (309 aa).

Residues Lys-18 and Thr-64 each act as charge relay system in the active site. Residues Thr-64, Asp-65, Phe-166, Arg-183, Val-238, Gln-239, and Asn-265 each contribute to the urate site. The Charge relay system role is filled by His-267. A Microbody targeting signal motif is present at residues 307–309 (SKL).

It belongs to the uricase family. Homotetramer. Post-translationally, the N-terminus is blocked. As to expression, expressed predominantly in the uninfected cells of the central tissue of the root nodule.

It is found in the peroxisome. The catalysed reaction is urate + O2 + H2O = 5-hydroxyisourate + H2O2. It participates in purine metabolism; urate degradation; (S)-allantoin from urate: step 1/3. In terms of biological role, catalyzes the oxidation of uric acid to 5-hydroxyisourate, which is further processed to form (S)-allantoin. The chain is Uricase-2 isozyme 1 from Glycine max (Soybean).